Reading from the N-terminus, the 76-residue chain is Toxin Acra III-1 (76 aa).

The 64-residue stretch at 4–67 folds into the LCN-type CS-alpha/beta domain; the sequence is PGNYPLDTRG…IWDAVKNHCT (64 aa). Intrachain disulfides connect Cys-18-Cys-41, Cys-27-Cys-46, and Cys-31-Cys-48.

The protein belongs to the long (3 C-C) scorpion toxin superfamily. Sodium channel inhibitor family. Beta subfamily. In terms of tissue distribution, expressed by the venom gland.

It localises to the secreted. Its function is as follows. Binds to sodium channels (Nav) and affects the channel activation process. This Androctonus crassicauda (Arabian fat-tailed scorpion) protein is Toxin Acra III-1.